Reading from the N-terminus, the 239-residue chain is Transcriptional activatory protein AadR (239 aa).

27-149 lines the a nucleoside 3',5'-cyclic phosphate pocket; it reads ICGELGPADH…FATRELSLAQ (123 aa). Residues 158–231 form the HTH crp-type domain; sequence RSAEEKVAAF…PDGVRVLDPK (74 aa). Positions 191–210 form a DNA-binding region, H-T-H motif; the sequence is RQDIADFLGLTIETVSRTFT.

Its function is as follows. Transcriptional activator of anaerobic gene expression. For aromatic acid degradation. Also required for the anaerobic degradation of benzoate. The protein is Transcriptional activatory protein AadR (aadR) of Rhodopseudomonas palustris (strain ATCC BAA-98 / CGA009).